The chain runs to 141 residues: Hemoglobin subunit alpha-1/2/3 (141 aa).

Residues 1–141 (VLSPADKTNV…VGTVLTSKYR (141 aa)) enclose the Globin domain. Residue S3 is modified to Phosphoserine. K7 is subject to N6-succinyllysine. T8 is modified (phosphothreonine). K11 carries the N6-succinyllysine modification. K16 carries the post-translational modification N6-acetyllysine; alternate. An N6-succinyllysine; alternate modification is found at K16. Position 24 is a phosphotyrosine (Y24). S35 carries the post-translational modification Phosphoserine. K40 carries the N6-succinyllysine modification. Phosphoserine is present on S49. Position 58 (H58) interacts with O2. H87 is a heme b binding site. The residue at position 102 (S102) is a Phosphoserine. Position 108 is a phosphothreonine (T108). Phosphoserine is present on residues S124 and S131. Residues T134 and T137 each carry the phosphothreonine modification. Residue S138 is modified to Phosphoserine.

It belongs to the globin family. Heterotetramer of two alpha chains and two beta chains. As to expression, red blood cells.

In terms of biological role, involved in oxygen transport from the lung to the various peripheral tissues. This is Hemoglobin subunit alpha-1/2/3 from Macaca nemestrina (Pig-tailed macaque).